A 419-amino-acid chain; its full sequence is Odorant receptor 56a (419 aa).

At 1 to 41 the chain is on the cytoplasmic side; sequence MFKVKDLLLSPTTFEDPIFGTHLRYFQWYGYVASKDQNRPL. Residues 42–62 traverse the membrane as a helical segment; that stretch reads LSLIRCTILTASIWLSCALML. Residues 63–76 lie on the Extracellular side of the membrane; sequence ARVFRGYENLNDGA. Residues 77–97 form a helical membrane-spanning segment; sequence TSYATAVQYFAVSIAMFNAYV. Residues 98–137 are Cytoplasmic-facing; it reads QRDKVISLLRVAHSDIQNLMHEADNREMELLVATQAYTRT. Residues 138 to 158 traverse the membrane as a helical segment; the sequence is ITLLIWIPSVIAGLMAYSDCI. At 159–196 the chain is on the extracellular side; sequence YRSLFLPKSVFNVPAVRRGEEHPILLFQLFPFGELCDN. Residues 197–217 form a helical membrane-spanning segment; sequence FVVGYLGPWYALGLGITAIPL. Over 218–292 the chain is Cytoplasmic; it reads WHTFITCLMK…FVQELQYLIC (75 aa). The helical transmembrane segment at 293–313 threads the bilayer; the sequence is VPVMADFIIFSVLICFLFFAL. The Extracellular portion of the chain corresponds to 314-323; that stretch reads TVGVPSKMDY. Residues 324 to 344 traverse the membrane as a helical segment; it reads FFMFIYLFVMAGILWIYHWHA. The Cytoplasmic portion of the chain corresponds to 345-389; it reads TLIVECHDELSLAYFSCGWYNFEMPLQKMLVFMMMHAQRPMKMRA. Residues 390–410 form a helical membrane-spanning segment; that stretch reads LLVDLNLRTFIDIGRGAYSYF. Topologically, residues 411-419 are extracellular; it reads NLLRSSHLY.

Belongs to the insect chemoreceptor superfamily. Heteromeric odorant receptor channel (TC 1.A.69) family. Or30a subfamily. As to quaternary structure, interacts with Orco. Complexes exist early in the endomembrane system in olfactory sensory neurons (OSNs), coupling these complexes to the conserved ciliary trafficking pathway. In terms of tissue distribution, expressed in olfactory sensory neurons in the antenna.

The protein resides in the cell membrane. Its function is as follows. Odorant receptor which mediates acceptance or avoidance behavior, depending on its substrates. The odorant receptor repertoire encodes a large collection of odor stimuli that vary widely in identity, intensity, and duration. May form a complex with Orco to form odorant-sensing units, providing sensitive and prolonged odorant signaling and calcium permeability. Specific receptor for geosmin, a microbial odorant that constitutes an ecologically relevant stimulus that alerts flies to the presence of harmful microbes and induces avoidance behavior. The protein is Odorant receptor 56a (Or56a) of Drosophila melanogaster (Fruit fly).